A 280-amino-acid polypeptide reads, in one-letter code: Shikimate dehydrogenase (NADP(+)) (280 aa).

Residues 19 to 21 (SFS) and threonine 66 each bind shikimate. Catalysis depends on lysine 70, which acts as the Proton acceptor. Glutamate 82 contacts NADP(+). Shikimate contacts are provided by asparagine 91 and aspartate 106. Residues 130-134 (GSGGA) and leucine 222 each bind NADP(+). Shikimate is bound at residue tyrosine 224. Position 245 (glycine 245) interacts with NADP(+).

Belongs to the shikimate dehydrogenase family. Homodimer.

It catalyses the reaction shikimate + NADP(+) = 3-dehydroshikimate + NADPH + H(+). It participates in metabolic intermediate biosynthesis; chorismate biosynthesis; chorismate from D-erythrose 4-phosphate and phosphoenolpyruvate: step 4/7. Involved in the biosynthesis of the chorismate, which leads to the biosynthesis of aromatic amino acids. Catalyzes the reversible NADPH linked reduction of 3-dehydroshikimate (DHSA) to yield shikimate (SA). This chain is Shikimate dehydrogenase (NADP(+)), found in Methanococcus maripaludis (strain C7 / ATCC BAA-1331).